The chain runs to 7067 residues: Replicase polyprotein 1ab (7067 aa).

The 116-residue stretch at 12–127 (THVQLSLPVL…YRNVLLRKNG (116 aa)) folds into the CoV Nsp1 globular domain. The region spanning 148-179 (ELGTDPIEDYEQNWNTKHGSGALRELTRELNG) is the BetaCoV Nsp1 C-terminal domain. The CoV Nsp2 N-terminal domain maps to 183–456 (TRYVDNNFCG…NEDLLEILNR (274 aa)). Residues cysteine 200, cysteine 231, histidine 234, histidine 236, cysteine 323, cysteine 326, cysteine 341, cysteine 344, cysteine 370, cysteine 373, histidine 382, and cysteine 416 each contribute to the Zn(2+) site. Residues 200-236 (CIKDFLARAGKSMCTLSEQLDYIESKRGVYCCREHEH) are C2H2. A C4 region spans residues 323–344 (CNHCDEVSWQTCDFLKATCEQC). The C2HC stretch occupies residues 370–416 (CPACQDPEVGPEHSVADYHNHSNIETRLRKGGRTKCFGGCVFSYVGC). The CoV Nsp2 middle domain maps to 458–688 (RVNINIVGDF…LGVVNKALEM (231 aa)). The CoV Nsp2 C-terminal domain occupies 690–818 (LDQVTIAGTK…TNNVFRLKGG (129 aa)). Residues 822-930 (KGVTFGEDTV…MYCSFYPPDE (109 aa)) form the Ubiquitin-like 1 domain. 3 consecutive Macro domains span residues 998–1164 (VNQF…LDYL), 1201–1329 (KIKA…LPSE), and 1337–1464 (VLGT…TSSS). The region spanning 1466 to 1532 (TPEEYFVETT…PLDKLKSLLS (67 aa)) is the DPUP domain. The Ubiquitin-like 2 domain maps to 1536–1591 (VKTIKVFTTVDNTNLHTHIVDMSMTYGQQFGPTYLDGADVTKIKPHVNHEGKTFFV). Positions 1605–1869 (YYHTIDESFL…YTEIEPKLDG (265 aa)) constitute a Peptidase C16 domain. Cysteine 1645 (for PL-PRO activity) is an active-site residue. Zn(2+)-binding residues include cysteine 1723, cysteine 1726, cysteine 1758, and cysteine 1760. The segment at 1723-1760 (CKHCGQKTTTLKGVEAVMYMGTLSYDELKTGVSIPCVC) adopts a C4-type zinc-finger fold. Residues histidine 1806 and aspartate 1820 each act as for PL-PRO activity in the active site. One can recognise a Nucleic acid-binding domain in the interval 1882–1992 (PIDLVPTQPM…CLWSTKPVDT (111 aa)). Residues 2017 to 2126 (TTSEEVVENP…LGQTAVITSN (110 aa)) form the G2M domain. The tract at residues 2086 to 2365 (LALGLKTLAT…IFFASFYYVW (280 aa)) is HD1. A helical membrane pass occupies residues 2197–2217 (LFTIVMWLLLLSICLGSLTYV). The 3Ecto domain maps to 2218-2288 (TAVLGVCLSS…QVTISSYKLD (71 aa)). 2 disulfide bridges follow: cysteine 2234-cysteine 2262 and cysteine 2253-cysteine 2259. 2 consecutive transmembrane segments (helical) span residues 2298 to 2318 (WLLA…SAIM) and 2345 to 2365 (MAPV…YYVW). The segment at 2366–2456 (KSYVHIMDGC…QFKRPINPTD (91 aa)) is Y1. The 369-residue stretch at 2366 to 2734 (KSYVHIMDGC…ITTKISLKGG (369 aa)) folds into the CoV Nsp3 Y domain. Positions 2370, 2375, 2380, 2383, 2416, 2419, 2423, and 2426 each coordinate Zn(2+). Residues 2370–2383 (HIMDGCTSSTCMMC) are ZF1. A ZF2 region spans residues 2416–2426 (CKAHNWNCLNC). The segment at 2457–2551 (QSAYVVDSVT…LLDQALVSDV (95 aa)) is Y2. Residues 2457–2734 (QSAYVVDSVT…ITTKISLKGG (278 aa)) form a coV-Y region. The interval 2552-2633 (GDSTEVSVKM…ECLKLSHHSD (82 aa)) is Y3. The interval 2634–2734 (IEVTGDSCNN…ITTKISLKGG (101 aa)) is Y4. The next 7 membrane-spanning stretches (helical) occupy residues 2744 to 2764 (LLKV…IMPV), 2986 to 3006 (PGVF…TPLV), 3016 to 3036 (ASVV…YYFM), 3048 to 3068 (VVAA…LAPA), 3071 to 3091 (FLPG…TNDV), 3099 to 3119 (WFAM…VFCI), and 3136 to 3156 (VMFN…TFLL). The segment at 2749 to 3156 (LLCVLAALFC…EEAALCTFLL (408 aa)) is HD2. The Nsp4C domain occupies 3136–3234 (VMFNGVTFST…QTSITSAVLQ (99 aa)). Positions 3235–3540 (SGFRKMAFPS…VRQCSGVTFQ (306 aa)) constitute a Peptidase C30 domain. Active-site for 3CL-PRO activity residues include histidine 3275 and cysteine 3379. The next 7 helical transmembrane spans lie at 3558–3578 (FLTS…FFVY), 3580–3600 (NAFL…MLLV), 3606–3626 (FLCL…MVYM), 3652–3672 (DCVM…RTVY), 3679–3698 (VWTL…GNSL), 3722–3742 (IMFL…LLFI), and 3750–3770 (IMLV…LFCL). The interval 3558-3770 (FLTSLLILVQ…CCCYFGLFCL (213 aa)) is HD3. The RdRp Nsp7 cofactor domain maps to 3831-3913 (SKMSDVKCTS…EMLDNRATLQ (83 aa)). The RdRp Nsp8 cofactor domain occupies 3914–4111 (AIASEFSSLP…LRANSAVKLQ (198 aa)). In terms of domain architecture, Nsp9 ssRNA-binding spans 4112–4224 (NNELSPVALR…GSLAATVRLQ (113 aa)). In terms of domain architecture, ExoN/MTase coactivator spans 4225 to 4363 (AGNATEVPAN…CDQLREPMMQ (139 aa)). 8 residues coordinate Zn(2+): cysteine 4298, cysteine 4301, histidine 4307, cysteine 4314, cysteine 4341, cysteine 4344, cysteine 4352, and cysteine 4354. 2 zinc fingers span residues 4298–4314 (CLYC…KGFC) and 4341–4354 (CTVC…GCSC). The 255-residue stretch at 4370 to 4624 (FLNRVCGVSA…AAESHMDADL (255 aa)) folds into the NiRAN domain. Mn(2+)-binding residues include asparagine 4572 and aspartate 4581. A Nsp12 Interface domain is found at 4629-4727 (VKWDLLKYDF…HNQDVNLHSS (99 aa)). Residues histidine 4658, cysteine 4664, cysteine 4669, cysteine 4673, and cysteine 4850 each contribute to the Zn(2+) site. Residues 4728-5295 (RLSFKELLVY…AMYTPHTVLQ (568 aa)) form the Nsp12 RNA-dependent RNA polymerase domain. Residues 4730 to 4944 (SFKELLVYAA…HQKLLKSIAA (215 aa)) are rdRp Fingers N-ter. Positions 4945 to 4983 (TRGATVVIGTSKFYGGWHNMLKTVYSDVESPHLMGWDYP) are rdRp Palm N-ter. The RdRp catalytic domain occupies 4975-5137 (PHLMGWDYPK…CYNSNYAAQG (163 aa)). Residues 4984-5042 (KCDRAMPNMLRIMASLILARKHSTCCNLSHRFYRLANECAQVLSEMVMCGGSLYVKPGG) form a rdRp Fingers C-ter region. Residues histidine 5005, cysteine 5008, and cysteine 5009 each contribute to the Zn(2+) site. The segment at 5043–5178 (TSSGDATTAY…TRGPHEFCSQ (136 aa)) is rdRp Palm C-ter. Residues serine 5122, aspartate 5123, and aspartate 5124 contribute to the active site. The rdRp Thumb stretch occupies residues 5179-5295 (HTMLVKQGDD…AMYTPHTVLQ (117 aa)). Residues 5296–5408 (AVGACVLCNS…TDFNAIATCD (113 aa)) enclose the CV ZBD domain. Cysteine 5300, cysteine 5303, cysteine 5311, cysteine 5314, cysteine 5321, cysteine 5324, histidine 5328, histidine 5334, cysteine 5345, cysteine 5350, cysteine 5367, and histidine 5370 together coordinate Zn(2+). The (+)RNA virus helicase ATP-binding domain occupies 5552-5733 (NISNEFSSNV…MKTIGPDMFL (182 aa)). 5577–5584 (GPPGTGKS) contributes to the ATP binding site. The (+)RNA virus helicase C-terminal domain occupies 5734–5903 (GTCRRCPAEI…TLQAENVTGL (170 aa)). The ExoN domain occupies 5968-6183 (MFITREEAIR…RCLAVHECFV (216 aa)). Active-site residues include aspartate 5986, glutamate 5988, and glutamate 6087. Zn(2+) is bound by residues cysteine 6103, cysteine 6106, cysteine 6122, histidine 6125, histidine 6153, cysteine 6157, and histidine 6160. Active-site residues include histidine 6164 and aspartate 6169. Zn(2+) is bound at residue cysteine 6175. The N7-MTase domain occupies 6192–6423 (YPIIGDELKI…NLWNTFTKLQ (232 aa)). Residue 6227-6233 (DIGNPKA) participates in S-adenosyl-L-methionine binding. Residues 6310 to 6324 (CDGGSLYVNKHAFHT) are gpppA-binding. Zn(2+) contacts are provided by cysteine 6348, cysteine 6369, cysteine 6380, and histidine 6383. One can recognise a Nsp15 N-terminal oligomerization domain in the interval 6424-6484 (SLENVAYNVV…NVAFELWAKR (61 aa)). The region spanning 6485-6610 (NIKPVPEIKI…YFKKVDGIIQ (126 aa)) is the AV-Nsp11N/CoV-Nsp15M domain. One can recognise a NendoU domain in the interval 6627–6766 (KPRSQMETDF…KDGHVETFYP (140 aa)). Active-site residues include histidine 6657, histidine 6672, lysine 6712, lysine 6815, aspartate 6899, lysine 6939, and glutamate 6972. The 295-residue stretch at 6771-7065 (SQAWQPGVAM…RVVVSSDILV (295 aa)) folds into the Nidovirus-type SAM-dependent 2'-O-MTase domain.

This sequence belongs to the coronaviruses polyprotein 1ab family. In terms of assembly, interacts with host PHB and PHB2. Interacts with papain-like protease nsp3 and non-structural protein 6. As to quaternary structure, monomer. Homodimer. Only the homodimer shows catalytic activity. In terms of assembly, interacts with nsp8 and nsp12 to form the replication-transcription complex (RTC): nsp12, nsp7, two subunits of nsp8, and up to two subunits of nsp13. Interacts with nsp7, nsp13 and nsp12 to form the replication-transcription complex (RTC): nsp12, nsp7, two subunits of nsp8, and up to two subunits of nsp13. As to quaternary structure, interacts with nsp12. In terms of assembly, interacts with proofreading exoribonuclease nsp14 and 2'-O-methyltransferase nsp16; these interactions enhance nsp14 and nsp16 enzymatic activities. Interacts with nsp7 and nsp8 to form the replication-transcription complex (RTC): nsp12, nsp7, two subunits of nsp8, and up to two subunits of nsp13. Interacts with nsp9. As to quaternary structure, interacts with nsp8 to form the replication-transcription complex (RTC): nsp12, nsp7, two subunits of nsp8, and up to two subunits of nsp13. Mn(2+) serves as cofactor. Mg(2+) is required as a cofactor. Specific enzymatic cleavages in vivo by its own proteases yield mature proteins. 3CL-PRO and PL-PRO proteinases are autocatalytically processed.

Its subcellular location is the host membrane. The protein localises to the host cytoplasm. The protein resides in the host perinuclear region. It localises to the host endoplasmic reticulum-Golgi intermediate compartment. It catalyses the reaction RNA(n) + a ribonucleoside 5'-triphosphate = RNA(n+1) + diphosphate. It carries out the reaction ATP + H2O = ADP + phosphate + H(+). The enzyme catalyses Thiol-dependent hydrolysis of ester, thioester, amide, peptide and isopeptide bonds formed by the C-terminal Gly of ubiquitin (a 76-residue protein attached to proteins as an intracellular targeting signal).. The catalysed reaction is a 5'-end (N(7)-methyl 5'-triphosphoguanosine)-ribonucleoside in mRNA + S-adenosyl-L-methionine = a 5'-end (N(7)-methyl 5'-triphosphoguanosine)-(2'-O-methyl-ribonucleoside) in mRNA + S-adenosyl-L-homocysteine + H(+). It catalyses the reaction uridylyl-uridylyl-ribonucleotide-RNA = a 3'-end uridylyl-2',3'-cyclophospho-uridine-RNA + a 5'-end dephospho-ribonucleoside-RNA. It carries out the reaction a 5'-end diphospho-ribonucleoside in mRNA + GTP + H(+) = a 5'-end (5'-triphosphoguanosine)-ribonucleoside in mRNA + diphosphate. The enzyme catalyses a 5'-end (5'-triphosphoguanosine)-ribonucleoside in mRNA + S-adenosyl-L-methionine = a 5'-end (N(7)-methyl 5'-triphosphoguanosine)-ribonucleoside in mRNA + S-adenosyl-L-homocysteine. Its function is as follows. The replicase polyprotein of coronaviruses is a multifunctional protein: it contains the activities necessary for the transcription of negative stranded RNA, leader RNA, subgenomic mRNAs and progeny virion RNA as well as proteinases responsible for the cleavage of the polyprotein into functional products. Functionally, inhibits host translation by interacting with the 40S ribosomal subunit. The nsp1-40S ribosome complex further induces an endonucleolytic cleavage near the 5'UTR of host mRNAs, targeting them for degradation. Viral mRNAs are not susceptible to nsp1-mediated endonucleolytic RNA cleavage thanks to the presence of a 5'-end leader sequence and are therefore protected from degradation. By suppressing host gene expression, nsp1 facilitates efficient viral gene expression in infected cells and evasion from host immune response. In terms of biological role, may play a role in the modulation of host cell survival signaling pathway by interacting with host PHB and PHB2. Indeed, these two proteins play a role in maintaining the functional integrity of the mitochondria and protecting cells from various stresses. Responsible for the cleavages located at the N-terminus of the replicase polyprotein. In addition, PL-PRO possesses a deubiquitinating/deISGylating activity and processes both 'Lys-48'- and 'Lys-63'-linked polyubiquitin chains from cellular substrates. Participates together with nsp4 in the assembly of virally-induced cytoplasmic double-membrane vesicles necessary for viral replication. Antagonizes innate immune induction of type I interferon by blocking the phosphorylation, dimerization and subsequent nuclear translocation of host IRF3. Also prevents host NF-kappa-B signaling. Its function is as follows. Participates in the assembly of virally-induced cytoplasmic double-membrane vesicles necessary for viral replication. Functionally, cleaves the C-terminus of replicase polyprotein at 11 sites. Recognizes substrates containing the core sequence [ILMVF]-Q-|-[SGACN]. Also able to bind an ADP-ribose-1''-phosphate (ADRP). In terms of biological role, plays a role in the initial induction of autophagosomes from host endoplasmic reticulum. Later, limits the expansion of these phagosomes that are no longer able to deliver viral components to lysosomes. Forms a hexadecamer with nsp8 (8 subunits of each) that may participate in viral replication by acting as a primase. Alternatively, may synthesize substantially longer products than oligonucleotide primers. Its function is as follows. Forms a hexadecamer with nsp7 (8 subunits of each) that may participate in viral replication by acting as a primase. Alternatively, may synthesize substantially longer products than oligonucleotide primers. Functionally, forms a primer, NSP9-pU, which is utilized by the polymerase for the initiation of RNA chains. Interacts with ribosome signal recognition particle RNA (SRP). Together with NSP8, suppress protein integration into the cell membrane, thereby disrupting host immune defenses. In terms of biological role, plays a pivotal role in viral transcription by stimulating both nsp14 3'-5' exoribonuclease and nsp16 2'-O-methyltransferase activities. Therefore plays an essential role in viral mRNAs cap methylation. RNA-directed RNA polymerase that catalyzes the transcription of viral genomic and subgenomic RNAs. Acts in complex with nsp7 and nsp8 to transcribe both the minus and positive strands of genomic RNA. The kinase-like NiRAN domain of NSP12 attaches one or more nucleotides to the amino terminus of NSP9, forming a covalent RNA-protein intermediate that serves as transcription/replication primer. Subgenomic RNAs (sgRNAs) are formed by discontinuous transcription: The polymerase has the ability to pause at transcription-regulating sequences (TRS) and jump to the leader TRS, resulting in a major deletion. This creates a series of subgenomic RNAs that are replicated, transcribed and translated. In addition, Nsp12 is a subunit of the viral RNA capping enzyme that catalyzes the RNA guanylyltransferase reaction for genomic and sub-genomic RNAs. Subsequently, the NiRAN domain transfers RNA to GDP, and forms the core cap structure GpppA-RNA. Its function is as follows. Multi-functional protein with a zinc-binding domain in N-terminus displaying RNA and DNA duplex-unwinding activities with 5' to 3' polarity. Activity of helicase is dependent on magnesium. Functionally, plays a role in viral RNA synthesis through two distinct activities. The N7-guanine methyltransferase activity plays a role in the formation of the cap structure GpppA-RNA. The proofreading exoribonuclease reduces the sensitivity of the virus to RNA mutagens during replication. This activity acts on both ssRNA and dsRNA in a 3'-5' direction. In terms of biological role, plays a role in viral transcription/replication and prevents the simultaneous activation of host cell dsRNA sensors, such as MDA5/IFIH1, OAS, and PKR. Acts by degrading the 5'-polyuridines generated during replication of the poly(A) region of viral genomic and subgenomic RNAs. Catalyzes a two-step reaction in which a 2'3'-cyclic phosphate (2'3'-cP) is first generated by 2'-O transesterification, which is then hydrolyzed to a 3'-phosphate (3'-P). If not degraded, poly(U) RNA would hybridize with poly(A) RNA tails and activate host dsRNA sensors. Methyltransferase that mediates mRNA cap 2'-O-ribose methylation to the 5'-cap structure of viral mRNAs. N7-methyl guanosine cap is a prerequisite for binding of nsp16. Therefore plays an essential role in viral mRNAs cap methylation which is essential to evade immune system. This is Replicase polyprotein 1ab (rep) from Bat coronavirus HKU3 (BtCoV).